Consider the following 202-residue polypeptide: Mevalonate-3-phosphate 5-kinase (202 aa).

The catalysed reaction is (R)-3-phosphomevalonate + ATP = (R)-3,5-bisphosphomevalonate + ADP + H(+). It participates in isoprenoid biosynthesis; isopentenyl diphosphate biosynthesis via mevalonate pathway. Phosphorylates mevalonate 3-phosphate to form mevalonate 3,5-bisphosphate. Functions in an alternative mevalonate pathway, only present in extreme acidophiles of the Thermoplasmatales order, which passes through mevalonate 3-phosphate rather than mevalonate 5-phosphate. This Thermoplasma acidophilum (strain ATCC 25905 / DSM 1728 / JCM 9062 / NBRC 15155 / AMRC-C165) protein is Mevalonate-3-phosphate 5-kinase.